A 195-amino-acid chain; its full sequence is Imidazoleglycerol-phosphate dehydratase (195 aa).

This sequence belongs to the imidazoleglycerol-phosphate dehydratase family.

The protein resides in the cytoplasm. The catalysed reaction is D-erythro-1-(imidazol-4-yl)glycerol 3-phosphate = 3-(imidazol-4-yl)-2-oxopropyl phosphate + H2O. It functions in the pathway amino-acid biosynthesis; L-histidine biosynthesis; L-histidine from 5-phospho-alpha-D-ribose 1-diphosphate: step 6/9. This is Imidazoleglycerol-phosphate dehydratase from Hydrogenovibrio crunogenus (strain DSM 25203 / XCL-2) (Thiomicrospira crunogena).